Here is a 409-residue protein sequence, read N- to C-terminus: MFLNSLDLPGQPENSRIVVAMSGGVDSSVVAGLLKKEGYDVIGITLQLYDHGAATHRVGACCAGQDIEDARCVAETLGIPHYVLDYEERFREAVIDPFAASYAHGETPVPCIACNQTVKFADLLATARELDADALATGHYIRSRSHGAHRALFRPLDSDRDQSYFLFATTQEQIDYLRFPLGDLPKARVREMATEMGFVVANKHDSQDICFVPQGKYSDIITKLRPEAVNPGVIVHVDGQVLGKHSGIVHYTVGQRRGIGVATGEALYVVYLDVENARVIVGPREMLETHKLFLRDVNWLGDERLDNFPPDGIEMAVKVRSTRPPHLARLHYQEGVFSVDFLECENSVAPGQACVFYDGNSDGARVLGGGFVTHSERAAETEMMLKRVLCNLETTSAVASEFKTKVSYT.

ATP is bound by residues 20 to 27 (AMSGGVDS) and L46. C114 acts as the Nucleophile in catalysis. C114 and C210 are joined by a disulfide. An ATP-binding site is contributed by G138. The interval 160-162 (RDQ) is interaction with tRNA. C210 functions as the Cysteine persulfide intermediate in the catalytic mechanism.

The protein belongs to the MnmA/TRMU family.

Its subcellular location is the cytoplasm. The catalysed reaction is S-sulfanyl-L-cysteinyl-[protein] + uridine(34) in tRNA + AH2 + ATP = 2-thiouridine(34) in tRNA + L-cysteinyl-[protein] + A + AMP + diphosphate + H(+). Catalyzes the 2-thiolation of uridine at the wobble position (U34) of tRNA, leading to the formation of s(2)U34. The polypeptide is tRNA-specific 2-thiouridylase MnmA (Bartonella henselae (strain ATCC 49882 / DSM 28221 / CCUG 30454 / Houston 1) (Rochalimaea henselae)).